A 372-amino-acid chain; its full sequence is Delta-type opioid receptor (372 aa).

Residues methionine 1–alanine 47 are Extracellular-facing. Residues asparagine 18 and asparagine 33 are each glycosylated (N-linked (GlcNAc...) asparagine). The helical transmembrane segment at leucine 48–valine 75 threads the bilayer. Residues arginine 76–asparagine 85 lie on the Cytoplasmic side of the membrane. Residues isoleucine 86–leucine 110 form a helical membrane-spanning segment. At methionine 111–lysine 122 the chain is on the extracellular side. An intrachain disulfide couples cysteine 121 to cysteine 198. The helical transmembrane segment at alanine 123–valine 144 threads the bilayer. The Cytoplasmic portion of the chain corresponds to aspartate 145 to alanine 163. The chain crosses the membrane as a helical span at residues lysine 164–methionine 186. Topologically, residues alanine 187 to serine 206 are extracellular. The chain crosses the membrane as a helical span at residues tryptophan 207–leucine 238. The Cytoplasmic segment spans residues arginine 239–arginine 261. Residues methionine 262–tryptophan 284 traverse the membrane as a helical segment. The Extracellular segment spans residues threonine 285 to alanine 299. Residues leucine 300–leucine 321 form a helical membrane-spanning segment. Residues aspartate 322–alanine 372 are Cytoplasmic-facing. Residue cysteine 333 is the site of S-palmitoyl cysteine attachment. Positions proline 340–alanine 372 are disordered. The span at arginine 347–valine 357 shows a compositional bias: basic and acidic residues.

Belongs to the G-protein coupled receptor 1 family. May form homooligomers. Forms a heterodimer with OPRM1. Interacts with GPRASP1. Interacts with RTP4; the interaction promotes cell surface localization of the OPRD1-OPRM1 heterodimer. N-glycosylated. Post-translationally, ubiquitinated. A basal ubiquitination seems not to be related to degradation. Ubiquitination is increased upon formation of OPRM1:OPRD1 oligomers leading to proteasomal degradation; the ubiquitination is diminished by RTP4. As to expression, detected in oocytes (at protein level). Detected in brain cortex, hypothalamus, hippocampus and olfactory bulb. Detected in oocytes.

The protein resides in the cell membrane. Functionally, G-protein coupled receptor that functions as a receptor for endogenous enkephalins and for a subset of other opioids. Ligand binding causes a conformation change that triggers signaling via guanine nucleotide-binding proteins (G proteins) and modulates the activity of down-stream effectors, such as adenylate cyclase. Signaling leads to the inhibition of adenylate cyclase activity. Inhibits neurotransmitter release by reducing calcium ion currents and increasing potassium ion conductance. Plays a role in the perception of pain and in opiate-mediated analgesia. Plays a role in developing analgesic tolerance to morphine. The protein is Delta-type opioid receptor (OPRD1) of Homo sapiens (Human).